The following is a 161-amino-acid chain: Allophycocyanin beta chain (161 aa).

Asn-71 carries the post-translational modification N4-methylasparagine. Cys-81 serves as a coordination point for (2R,3E)-phycocyanobilin.

The protein belongs to the phycobiliprotein family. As to quaternary structure, heterodimer of an alpha and a beta chain. Contains one covalently linked phycocyanobilin chromophore.

It is found in the cellular thylakoid membrane. In terms of biological role, light-harvesting photosynthetic bile pigment-protein from the phycobiliprotein complex. Allophycocyanin has a maximum absorption at approximately 650 nanometers. The chain is Allophycocyanin beta chain (apcB) from Synechococcus sp. (strain ATCC 27144 / PCC 6301 / SAUG 1402/1) (Anacystis nidulans).